A 122-amino-acid chain; its full sequence is Alkene monooxygenase system, ferredoxin component (122 aa).

The region spanning 16-111 (VDVCAVDDLW…LKVEGGRVLI (96 aa)) is the Rieske domain. C55, H57, C75, and H78 together coordinate [2Fe-2S] cluster.

It belongs to the bacterial ring-hydroxylating dioxygenase ferredoxin component family. In terms of assembly, homodimer. The alkene monooxygenase multicomponent enzyme system is composed of an electron transfer component and a monooxygenase component interacting with the effector protein XamoD. The electron transfer component is composed of a ferredoxin reductase (XamoF) and a ferredoxin (XamoC), and the monooxygenase component is formed by a heterohexamer (dimer of heterotrimers) of two alpha subunits (XamoA), two beta subunits (XamoE) and two gamma subunits (XamoB). [2Fe-2S] cluster serves as cofactor.

The protein resides in the cytoplasm. Functionally, ferredoxin component of the alkene monooxygenase multicomponent enzyme system which catalyzes the O2- and NADH-dependent epoxidation of short chain (C2 to C6) alkenes to their corresponding epoxides. Functions as an intermediate electron transfer protein. This Xanthobacter autotrophicus (strain ATCC BAA-1158 / Py2) protein is Alkene monooxygenase system, ferredoxin component.